A 135-amino-acid chain; its full sequence is UPF0102 protein RPC_0320 (135 aa).

It belongs to the UPF0102 family.

This chain is UPF0102 protein RPC_0320, found in Rhodopseudomonas palustris (strain BisB18).